An 83-amino-acid polypeptide reads, in one-letter code: Transmembrane protein EP84R (83 aa).

2 consecutive transmembrane segments (helical) span residues 31–51 (IIGV…IIIL) and 59–79 (AGSI…FLIY).

Belongs to the asfivirus EP84R family.

It localises to the virion membrane. The polypeptide is Transmembrane protein EP84R (Ornithodoros (relapsing fever ticks)).